The primary structure comprises 405 residues: Bifunctional enzyme IspD/IspF (405 aa).

The segment at 1–246 is 2-C-methyl-D-erythritol 4-phosphate cytidylyltransferase; the sequence is MLQMPSKQPI…KLSASLLPDV (246 aa). The segment at 247–405 is 2-C-methyl-D-erythritol 2,4-cyclodiphosphate synthase; it reads RTGNGYDVHQ…TATVVYRGRT (159 aa). A divalent metal cation-binding residues include aspartate 253 and histidine 255. 4-CDP-2-C-methyl-D-erythritol 2-phosphate-binding positions include 253–255 and 279–280; these read DVH and HS. A divalent metal cation is bound at residue histidine 287. Residues 301–303, 377–380, phenylalanine 384, and arginine 387 contribute to the 4-CDP-2-C-methyl-D-erythritol 2-phosphate site; these read DIG and TTNE.

In the N-terminal section; belongs to the IspD/TarI cytidylyltransferase family. IspD subfamily. The protein in the C-terminal section; belongs to the IspF family. The cofactor is a divalent metal cation.

It carries out the reaction 2-C-methyl-D-erythritol 4-phosphate + CTP + H(+) = 4-CDP-2-C-methyl-D-erythritol + diphosphate. The enzyme catalyses 4-CDP-2-C-methyl-D-erythritol 2-phosphate = 2-C-methyl-D-erythritol 2,4-cyclic diphosphate + CMP. It functions in the pathway isoprenoid biosynthesis; isopentenyl diphosphate biosynthesis via DXP pathway; isopentenyl diphosphate from 1-deoxy-D-xylulose 5-phosphate: step 2/6. Its pathway is isoprenoid biosynthesis; isopentenyl diphosphate biosynthesis via DXP pathway; isopentenyl diphosphate from 1-deoxy-D-xylulose 5-phosphate: step 4/6. Its function is as follows. Bifunctional enzyme that catalyzes the formation of 4-diphosphocytidyl-2-C-methyl-D-erythritol from CTP and 2-C-methyl-D-erythritol 4-phosphate (MEP) (IspD), and catalyzes the conversion of 4-diphosphocytidyl-2-C-methyl-D-erythritol 2-phosphate (CDP-ME2P) to 2-C-methyl-D-erythritol 2,4-cyclodiphosphate (ME-CPP) with a corresponding release of cytidine 5-monophosphate (CMP) (IspF). The polypeptide is Bifunctional enzyme IspD/IspF (Rhizobium etli (strain CIAT 652)).